The following is an 834-amino-acid chain: DNA polymerase I, thermostable (834 aa).

The 5'-3' exonuclease domain occupies 176-262 (RPEQWVDFRA…DLPLEVDLAQ (87 aa)). The tract at residues 412 to 834 (ERLHRNLLKR…MGEDWLSAKG (423 aa)) is polymerase.

The protein belongs to the DNA polymerase type-A family.

It catalyses the reaction DNA(n) + a 2'-deoxyribonucleoside 5'-triphosphate = DNA(n+1) + diphosphate. Its function is as follows. In addition to polymerase activity, this DNA polymerase exhibits 5'-3' exonuclease activity. This is DNA polymerase I, thermostable (polA) from Thermus thermophilus (strain ATCC 27634 / DSM 579 / HB8).